A 245-amino-acid chain; its full sequence is 4-hydroxy-tetrahydrodipicolinate reductase (245 aa).

NAD(+)-binding positions include 8–13 (GSTGKM), 78–80 (GTT), and 102–105 (SANM). Histidine 134 (proton donor/acceptor) is an active-site residue. Histidine 135 contacts (S)-2,3,4,5-tetrahydrodipicolinate. Lysine 138 serves as the catalytic Proton donor. 144 to 145 (GT) is a (S)-2,3,4,5-tetrahydrodipicolinate binding site.

It belongs to the DapB family.

The protein resides in the cytoplasm. It carries out the reaction (S)-2,3,4,5-tetrahydrodipicolinate + NAD(+) + H2O = (2S,4S)-4-hydroxy-2,3,4,5-tetrahydrodipicolinate + NADH + H(+). It catalyses the reaction (S)-2,3,4,5-tetrahydrodipicolinate + NADP(+) + H2O = (2S,4S)-4-hydroxy-2,3,4,5-tetrahydrodipicolinate + NADPH + H(+). It functions in the pathway amino-acid biosynthesis; L-lysine biosynthesis via DAP pathway; (S)-tetrahydrodipicolinate from L-aspartate: step 4/4. Catalyzes the conversion of 4-hydroxy-tetrahydrodipicolinate (HTPA) to tetrahydrodipicolinate. This is 4-hydroxy-tetrahydrodipicolinate reductase from Rickettsia akari (strain Hartford).